The sequence spans 107 residues: Integration host factor subunit beta (107 aa).

The tract at residues 76 to 107 (FVPHFKPGKELRERVDGRAGEPLKADDPDDDR) is disordered. Positions 82-101 (PGKELRERVDGRAGEPLKAD) are enriched in basic and acidic residues.

The protein belongs to the bacterial histone-like protein family. In terms of assembly, heterodimer of an alpha and a beta chain.

Functionally, this protein is one of the two subunits of integration host factor, a specific DNA-binding protein that functions in genetic recombination as well as in transcriptional and translational control. In Burkholderia cenocepacia (strain HI2424), this protein is Integration host factor subunit beta.